The chain runs to 217 residues: Serine acetyltransferase (217 aa).

The protein belongs to the transferase hexapeptide repeat family.

It localises to the cytoplasm. The catalysed reaction is L-serine + acetyl-CoA = O-acetyl-L-serine + CoA. Its pathway is amino-acid biosynthesis; L-cysteine biosynthesis; L-cysteine from L-serine: step 1/2. Its activity is regulated as follows. Inhibited by cysteine. Functionally, catalyzes the acetylation of serine by acetyl-CoA to produce O-acetylserine (OAS). This chain is Serine acetyltransferase, found in Bacillus pumilus (strain SAFR-032).